Consider the following 632-residue polypeptide: 1-deoxy-D-xylulose-5-phosphate synthase (632 aa).

Thiamine diphosphate contacts are provided by residues His-87 and 128-130; that span reads GHS. Mg(2+) is bound at residue Asp-159. Residues 160 to 161, Asn-188, Phe-295, and Glu-377 each bind thiamine diphosphate; that span reads GA. Asn-188 provides a ligand contact to Mg(2+).

The protein belongs to the transketolase family. DXPS subfamily. In terms of assembly, homodimer. Mg(2+) is required as a cofactor. Thiamine diphosphate serves as cofactor.

It catalyses the reaction D-glyceraldehyde 3-phosphate + pyruvate + H(+) = 1-deoxy-D-xylulose 5-phosphate + CO2. It functions in the pathway metabolic intermediate biosynthesis; 1-deoxy-D-xylulose 5-phosphate biosynthesis; 1-deoxy-D-xylulose 5-phosphate from D-glyceraldehyde 3-phosphate and pyruvate: step 1/1. In terms of biological role, catalyzes the acyloin condensation reaction between C atoms 2 and 3 of pyruvate and glyceraldehyde 3-phosphate to yield 1-deoxy-D-xylulose-5-phosphate (DXP). The chain is 1-deoxy-D-xylulose-5-phosphate synthase from Stutzerimonas stutzeri (strain A1501) (Pseudomonas stutzeri).